Here is a 135-residue protein sequence, read N- to C-terminus: Putative nickel-responsive regulator (135 aa).

His-79, His-90, His-92, and Cys-98 together coordinate Ni(2+).

The protein belongs to the transcriptional regulatory CopG/NikR family. It depends on Ni(2+) as a cofactor.

In terms of biological role, transcriptional regulator. This chain is Putative nickel-responsive regulator, found in Dictyoglomus thermophilum (strain ATCC 35947 / DSM 3960 / H-6-12).